Reading from the N-terminus, the 510-residue chain is Histidine ammonia-lyase (510 aa).

The 5-imidazolinone (Ala-Gly) cross-link spans 143 to 145 (ASG). Ser144 is modified (2,3-didehydroalanine (Ser)).

It belongs to the PAL/histidase family. Post-translationally, contains an active site 4-methylidene-imidazol-5-one (MIO), which is formed autocatalytically by cyclization and dehydration of residues Ala-Ser-Gly.

Its subcellular location is the cytoplasm. It carries out the reaction L-histidine = trans-urocanate + NH4(+). Its pathway is amino-acid degradation; L-histidine degradation into L-glutamate; N-formimidoyl-L-glutamate from L-histidine: step 1/3. This chain is Histidine ammonia-lyase, found in Shewanella woodyi (strain ATCC 51908 / MS32).